The sequence spans 150 residues: Large ribosomal subunit protein uL13 (150 aa).

The tract at residues 130 to 150 (EHPHAAQQPKTLQLDPAASAQ) is disordered.

This sequence belongs to the universal ribosomal protein uL13 family. In terms of assembly, part of the 50S ribosomal subunit.

This protein is one of the early assembly proteins of the 50S ribosomal subunit, although it is not seen to bind rRNA by itself. It is important during the early stages of 50S assembly. This chain is Large ribosomal subunit protein uL13, found in Synechococcus sp. (strain CC9311).